We begin with the raw amino-acid sequence, 422 residues long: ORC1-type DNA replication protein 13 (422 aa).

Residues 80 to 84 (TGKTL), tyrosine 231, and arginine 243 contribute to the ATP site.

Belongs to the CDC6/cdc18 family.

Involved in regulation of DNA replication. The protein is ORC1-type DNA replication protein 13 (cdc6m) of Haloarcula marismortui (strain ATCC 43049 / DSM 3752 / JCM 8966 / VKM B-1809) (Halobacterium marismortui).